The following is a 411-amino-acid chain: Multidrug resistance protein MdtA (411 aa).

The signal sequence occupies residues 1–19 (MNAKRIRGLLILAAVIAIA). Residues 31–49 (PAAPGTSEQHAARTSHSEN) are compositionally biased toward polar residues. Residues 31–58 (PAAPGTSEQHAARTSHSENSGSGGGRRA) form a disordered region.

Belongs to the membrane fusion protein (MFP) (TC 8.A.1) family. In terms of assembly, part of a tripartite efflux system composed of MdtA, MdtB and MdtC.

Its subcellular location is the cell inner membrane. In Pectobacterium atrosepticum (strain SCRI 1043 / ATCC BAA-672) (Erwinia carotovora subsp. atroseptica), this protein is Multidrug resistance protein MdtA.